The chain runs to 364 residues: Mannose-1-phosphate guanyltransferase (364 aa).

It belongs to the transferase hexapeptide repeat family.

It localises to the cytoplasm. It catalyses the reaction alpha-D-mannose 1-phosphate + GTP + H(+) = GDP-alpha-D-mannose + diphosphate. It functions in the pathway nucleotide-sugar biosynthesis; GDP-alpha-D-mannose biosynthesis; GDP-alpha-D-mannose from alpha-D-mannose 1-phosphate (GTP route): step 1/1. Functionally, involved in cell wall synthesis where it is required for glycosylation. Involved in cell cycle progression through cell-size checkpoint. In Aspergillus fumigatus (strain ATCC MYA-4609 / CBS 101355 / FGSC A1100 / Af293) (Neosartorya fumigata), this protein is Mannose-1-phosphate guanyltransferase (mpg1).